A 212-amino-acid polypeptide reads, in one-letter code: Thymidylate kinase (212 aa).

11–18 (GLEGAGKT) contacts ATP.

This sequence belongs to the thymidylate kinase family.

It carries out the reaction dTMP + ATP = dTDP + ADP. Its function is as follows. Phosphorylation of dTMP to form dTDP in both de novo and salvage pathways of dTTP synthesis. This is Thymidylate kinase from Buchnera aphidicola subsp. Schizaphis graminum (strain Sg).